Here is a 436-residue protein sequence, read N- to C-terminus: Zinc finger protein 101 (436 aa).

Residues valine 4–threonine 82 form the KRAB domain. The segment at cysteine 102–histidine 124 adopts a C2H2-type 1 zinc-finger fold. Over residues lysine 128–arginine 141 the composition is skewed to basic and acidic residues. The tract at residues lysine 128 to threonine 164 is disordered. Over residues isoleucine 151 to proline 163 the composition is skewed to polar residues. A C2H2-type 2 zinc finger spans residues tyrosine 169 to histidine 191. A C2H2-type 3; degenerate zinc finger spans residues tyrosine 197 to histidine 219. C2H2-type zinc fingers lie at residues tyrosine 225–histidine 247, tyrosine 253–histidine 276, histidine 282–histidine 304, tyrosine 310–histidine 332, tyrosine 338–histidine 360, tyrosine 366–histidine 388, and phenylalanine 394–histidine 416.

The protein belongs to the krueppel C2H2-type zinc-finger protein family. As to expression, expressed in a variety of adult and fetal tissues.

The protein localises to the nucleus. May be involved in transcriptional regulation. This chain is Zinc finger protein 101 (ZNF101), found in Homo sapiens (Human).